Reading from the N-terminus, the 665-residue chain is UvrABC system protein B (665 aa).

The region spanning Asp-31–Gln-414 is the Helicase ATP-binding domain. Gly-44 to Thr-51 is a binding site for ATP. The short motif at Tyr-97–Ile-120 is the Beta-hairpin element. A Helicase C-terminal domain is found at Gln-435–Ile-601. In terms of domain architecture, UVR spans Ala-629–Ala-664.

It belongs to the UvrB family. As to quaternary structure, forms a heterotetramer with UvrA during the search for lesions. Interacts with UvrC in an incision complex.

The protein localises to the cytoplasm. Functionally, the UvrABC repair system catalyzes the recognition and processing of DNA lesions. A damage recognition complex composed of 2 UvrA and 2 UvrB subunits scans DNA for abnormalities. Upon binding of the UvrA(2)B(2) complex to a putative damaged site, the DNA wraps around one UvrB monomer. DNA wrap is dependent on ATP binding by UvrB and probably causes local melting of the DNA helix, facilitating insertion of UvrB beta-hairpin between the DNA strands. Then UvrB probes one DNA strand for the presence of a lesion. If a lesion is found the UvrA subunits dissociate and the UvrB-DNA preincision complex is formed. This complex is subsequently bound by UvrC and the second UvrB is released. If no lesion is found, the DNA wraps around the other UvrB subunit that will check the other stand for damage. This Enterococcus faecalis (strain ATCC 700802 / V583) protein is UvrABC system protein B.